Reading from the N-terminus, the 217-residue chain is GTP cyclohydrolase 1 (217 aa).

Residues Cys109, His112, and Cys180 each contribute to the Zn(2+) site.

Belongs to the GTP cyclohydrolase I family. As to quaternary structure, toroid-shaped homodecamer, composed of two pentamers of five dimers.

It catalyses the reaction GTP + H2O = 7,8-dihydroneopterin 3'-triphosphate + formate + H(+). It functions in the pathway cofactor biosynthesis; 7,8-dihydroneopterin triphosphate biosynthesis; 7,8-dihydroneopterin triphosphate from GTP: step 1/1. The sequence is that of GTP cyclohydrolase 1 from Vibrio vulnificus (strain CMCP6).